Consider the following 82-residue polypeptide: Putative ribonuclease VapC34 (82 aa).

Aspartate 4 lines the Mg(2+) pocket.

Belongs to the PINc/VapC protein family. Requires Mg(2+) as cofactor.

In terms of biological role, toxic component of a possible type II toxin-antitoxin (TA) system. A putative RNase. Its cognate antitoxin is VapB34. The polypeptide is Putative ribonuclease VapC34 (vapC34) (Mycobacterium tuberculosis (strain CDC 1551 / Oshkosh)).